The primary structure comprises 273 residues: Putative B3 domain-containing protein At5g58280 (273 aa).

The TF-B3 DNA-binding region spans 127–218; sequence FVKSMVRSHV…KFKIYVFKGN (92 aa). The tract at residues 225–273 is disordered; the sequence is SARKRGRATTPSEEEEEEEDKDVEESGDEEHSSRATKRSSVRLLRKRKA. The span at 236–252 shows a compositional bias: acidic residues; sequence SEEEEEEEDKDVEESGD. Positions 258–273 are enriched in basic residues; it reads RATKRSSVRLLRKRKA.

It is found in the nucleus. In Arabidopsis thaliana (Mouse-ear cress), this protein is Putative B3 domain-containing protein At5g58280.